Reading from the N-terminus, the 490-residue chain is Trigger factor (490 aa).

In terms of domain architecture, PPIase FKBP-type spans 162–243; that stretch reads GDFVSIDLSA…VGSIKERELP (82 aa). The tract at residues 433 to 490 is disordered; it reads VDAVLGPRRGGADEAGAEAEAAEEKPAKAKKSADSEKTDKSEKAEKKSKKKSKDDDAE. The segment covering 454 to 477 has biased composition (basic and acidic residues); that stretch reads AEEKPAKAKKSADSEKTDKSEKAE.

The protein belongs to the FKBP-type PPIase family. Tig subfamily.

The protein localises to the cytoplasm. The catalysed reaction is [protein]-peptidylproline (omega=180) = [protein]-peptidylproline (omega=0). In terms of biological role, involved in protein export. Acts as a chaperone by maintaining the newly synthesized protein in an open conformation. Functions as a peptidyl-prolyl cis-trans isomerase. This is Trigger factor from Mycobacteroides abscessus (strain ATCC 19977 / DSM 44196 / CCUG 20993 / CIP 104536 / JCM 13569 / NCTC 13031 / TMC 1543 / L948) (Mycobacterium abscessus).